The sequence spans 304 residues: Secreted mono- and diacylglycerol lipase LIP1 (304 aa).

A signal peptide spans Met1–Ala19. Thr32 is a glycosylation site (O-linked (Man...) threonine). A disulfide bridge connects residues Cys57 and Cys297. Residue Ser171 is the Nucleophile of the active site. Residue Asp228 is part of the active site. Asn253 carries an N-linked (GlcNAc...) asparagine glycan. His281 is a catalytic residue.

This sequence belongs to the AB hydrolase superfamily. Lipase family. Class 3 subfamily.

Its subcellular location is the secreted. It localises to the cell wall. It catalyses the reaction a monoacylglycerol + H2O = glycerol + a fatty acid + H(+). It carries out the reaction a diacylglycerol + H2O = a monoacylglycerol + a fatty acid + H(+). Its activity is regulated as follows. RHC 80267, a well-known inhibitor of diacylglycerol lipases from mammals, also acts as an inhibitor for LIP1/SMG1. Secreted lipase involved in Dandruff and seborrheic dermatitis (D/SD) probably via lipase-mediated breakdown of sebaceous lipids and release of irritating free fatty acids. Shows activity against monoglyceride and diglyceride substrates, but not triglyceride substrates and does not exhibit regio-selective production of diacylglycerols. Able to hydrolyze diacylglycerols such as distearin, dilinolein, dipalmitoylglycerol and dipalmitolein. Cleaves oleic acid from 1,2 isomers of diolein on both the 1 and the 2 position of the glycerol backbone, resulting mainly in free fatty acids but no monoolein is detected. Shows activity on monoolein and liberates mostly free fatty acids, but can also perform the reverse reaction and produce diolein. This is Secreted mono- and diacylglycerol lipase LIP1 from Malassezia globosa (strain ATCC MYA-4612 / CBS 7966) (Dandruff-associated fungus).